Consider the following 214-residue polypeptide: Shikimate kinase (214 aa).

35–40 (GAGKST) contacts ATP. Ser-39 contributes to the Mg(2+) binding site. Substrate is bound by residues Asp-57, Arg-81, and Gly-103. Position 141 (Arg-141) interacts with ATP. Position 160 (Arg-160) interacts with substrate.

Belongs to the shikimate kinase family. Monomer. Mg(2+) serves as cofactor.

Its subcellular location is the cytoplasm. The catalysed reaction is shikimate + ATP = 3-phosphoshikimate + ADP + H(+). It functions in the pathway metabolic intermediate biosynthesis; chorismate biosynthesis; chorismate from D-erythrose 4-phosphate and phosphoenolpyruvate: step 5/7. Functionally, catalyzes the specific phosphorylation of the 3-hydroxyl group of shikimic acid using ATP as a cosubstrate. The chain is Shikimate kinase from Nitrobacter winogradskyi (strain ATCC 25391 / DSM 10237 / CIP 104748 / NCIMB 11846 / Nb-255).